The following is a 332-amino-acid chain: 4-hydroxy-3-methylbut-2-enyl diphosphate reductase (332 aa).

C13 contributes to the [4Fe-4S] cluster binding site. Residues H41 and H75 each contribute to the (2E)-4-hydroxy-3-methylbut-2-enyl diphosphate site. 2 residues coordinate dimethylallyl diphosphate: H41 and H75. Isopentenyl diphosphate-binding residues include H41 and H75. Position 97 (C97) interacts with [4Fe-4S] cluster. Residue H125 participates in (2E)-4-hydroxy-3-methylbut-2-enyl diphosphate binding. Position 125 (H125) interacts with dimethylallyl diphosphate. H125 is an isopentenyl diphosphate binding site. The Proton donor role is filled by E127. T168 contacts (2E)-4-hydroxy-3-methylbut-2-enyl diphosphate. A [4Fe-4S] cluster-binding site is contributed by C229. Positions 257, 258, 259, and 306 each coordinate (2E)-4-hydroxy-3-methylbut-2-enyl diphosphate. 4 residues coordinate dimethylallyl diphosphate: S257, S258, N259, and S306. S257, S258, N259, and S306 together coordinate isopentenyl diphosphate.

The protein belongs to the IspH family. Requires [4Fe-4S] cluster as cofactor.

It catalyses the reaction isopentenyl diphosphate + 2 oxidized [2Fe-2S]-[ferredoxin] + H2O = (2E)-4-hydroxy-3-methylbut-2-enyl diphosphate + 2 reduced [2Fe-2S]-[ferredoxin] + 2 H(+). It carries out the reaction dimethylallyl diphosphate + 2 oxidized [2Fe-2S]-[ferredoxin] + H2O = (2E)-4-hydroxy-3-methylbut-2-enyl diphosphate + 2 reduced [2Fe-2S]-[ferredoxin] + 2 H(+). It participates in isoprenoid biosynthesis; dimethylallyl diphosphate biosynthesis; dimethylallyl diphosphate from (2E)-4-hydroxy-3-methylbutenyl diphosphate: step 1/1. The protein operates within isoprenoid biosynthesis; isopentenyl diphosphate biosynthesis via DXP pathway; isopentenyl diphosphate from 1-deoxy-D-xylulose 5-phosphate: step 6/6. Its function is as follows. Catalyzes the conversion of 1-hydroxy-2-methyl-2-(E)-butenyl 4-diphosphate (HMBPP) into a mixture of isopentenyl diphosphate (IPP) and dimethylallyl diphosphate (DMAPP). Acts in the terminal step of the DOXP/MEP pathway for isoprenoid precursor biosynthesis. This is 4-hydroxy-3-methylbut-2-enyl diphosphate reductase from Chlorobaculum parvum (strain DSM 263 / NCIMB 8327) (Chlorobium vibrioforme subsp. thiosulfatophilum).